The sequence spans 390 residues: Putative 8-amino-7-oxononanoate synthase (390 aa).

Position 20 (Arg20) interacts with substrate. 107-108 (GY) contributes to the pyridoxal 5'-phosphate binding site. His132 contributes to the substrate binding site. Residues Ser181, 206–209 (DDAH), and 237–240 (TLGK) each bind pyridoxal 5'-phosphate. An N6-(pyridoxal phosphate)lysine modification is found at Lys240. Thr356 contacts substrate.

Belongs to the class-II pyridoxal-phosphate-dependent aminotransferase family. BioF subfamily. In terms of assembly, homodimer. Pyridoxal 5'-phosphate serves as cofactor.

The enzyme catalyses 6-carboxyhexanoyl-[ACP] + L-alanine + H(+) = (8S)-8-amino-7-oxononanoate + holo-[ACP] + CO2. The protein operates within cofactor biosynthesis; biotin biosynthesis. Its function is as follows. Catalyzes the decarboxylative condensation of pimeloyl-[acyl-carrier protein] and L-alanine to produce 8-amino-7-oxononanoate (AON), [acyl-carrier protein], and carbon dioxide. The polypeptide is Putative 8-amino-7-oxononanoate synthase (bioF) (Syntrophotalea carbinolica (strain DSM 2380 / NBRC 103641 / GraBd1) (Pelobacter carbinolicus)).